A 156-amino-acid chain; its full sequence is Small ribosomal subunit protein uS7 (156 aa).

The protein belongs to the universal ribosomal protein uS7 family. Part of the 30S ribosomal subunit. Contacts proteins S9 and S11.

Functionally, one of the primary rRNA binding proteins, it binds directly to 16S rRNA where it nucleates assembly of the head domain of the 30S subunit. Is located at the subunit interface close to the decoding center, probably blocks exit of the E-site tRNA. This Tremblaya princeps protein is Small ribosomal subunit protein uS7.